A 623-amino-acid polypeptide reads, in one-letter code: Flap endonuclease 1 (623 aa).

An N-domain region spans residues 1-106 (MGIKGLTKFI…SELEKRGEKR (106 aa)). Residue Asp-34 participates in Mg(2+) binding. Positions 47 and 72 each coordinate DNA. Positions 88, 160, 162, 181, and 183 each coordinate Mg(2+). The segment at 124-267 (EIKKQSGRTV…KTAYNLIKEY (144 aa)) is I-domain. Glu-160 contributes to the DNA binding site. Residues Gly-245 and Asp-247 each contribute to the DNA site. Asp-247 contributes to the Mg(2+) binding site. Residues 350-358 (TQRRLDNFF) form an interaction with PCNA region. The interval 368–517 (LVIEESQSQS…LSSNSTLHSC (150 aa)) is disordered. Basic and acidic residues-rich tracts occupy residues 410 to 424 (TKVEKEPKREKKDEE) and 466 to 482 (QKSDSESGNVKKEKTEQ). Polar residues predominate over residues 502 to 517 (AGSNTHLSSNSTLHSC).

This sequence belongs to the XPG/RAD2 endonuclease family. FEN1 subfamily. Interacts with PCNA. Three molecules of FEN1 bind to one PCNA trimer with each molecule binding to one PCNA monomer. PCNA stimulates the nuclease activity without altering cleavage specificity. It depends on Mg(2+) as a cofactor. Phosphorylated. Phosphorylation upon DNA damage induces relocalization to the nuclear plasma.

The protein localises to the nucleus. Its subcellular location is the nucleolus. The protein resides in the nucleoplasm. It localises to the mitochondrion. Structure-specific nuclease with 5'-flap endonuclease and 5'-3' exonuclease activities involved in DNA replication and repair. During DNA replication, cleaves the 5'-overhanging flap structure that is generated by displacement synthesis when DNA polymerase encounters the 5'-end of a downstream Okazaki fragment. It enters the flap from the 5'-end and then tracks to cleave the flap base, leaving a nick for ligation. Also involved in the long patch base excision repair (LP-BER) pathway, by cleaving within the apurinic/apyrimidinic (AP) site-terminated flap. Acts as a genome stabilization factor that prevents flaps from equilibrating into structures that lead to duplications and deletions. Also possesses 5'-3' exonuclease activity on nicked or gapped double-stranded DNA, and exhibits RNase H activity. Also involved in replication and repair of rDNA and in repairing mitochondrial DNA. In Plasmodium vivax (strain Salvador I), this protein is Flap endonuclease 1.